A 464-amino-acid chain; its full sequence is 3-isopropylmalate dehydratase large subunit (464 aa).

[4Fe-4S] cluster contacts are provided by cysteine 337, cysteine 397, and cysteine 400.

This sequence belongs to the aconitase/IPM isomerase family. LeuC type 1 subfamily. In terms of assembly, heterodimer of LeuC and LeuD. Requires [4Fe-4S] cluster as cofactor.

The catalysed reaction is (2R,3S)-3-isopropylmalate = (2S)-2-isopropylmalate. The protein operates within amino-acid biosynthesis; L-leucine biosynthesis; L-leucine from 3-methyl-2-oxobutanoate: step 2/4. Its function is as follows. Catalyzes the isomerization between 2-isopropylmalate and 3-isopropylmalate, via the formation of 2-isopropylmaleate. This is 3-isopropylmalate dehydratase large subunit from Bacillus cereus (strain B4264).